A 209-amino-acid chain; its full sequence is ATP phosphoribosyltransferase (209 aa).

The protein belongs to the ATP phosphoribosyltransferase family. Short subfamily. In terms of assembly, heteromultimer composed of HisG and HisZ subunits.

The protein localises to the cytoplasm. The enzyme catalyses 1-(5-phospho-beta-D-ribosyl)-ATP + diphosphate = 5-phospho-alpha-D-ribose 1-diphosphate + ATP. It participates in amino-acid biosynthesis; L-histidine biosynthesis; L-histidine from 5-phospho-alpha-D-ribose 1-diphosphate: step 1/9. In terms of biological role, catalyzes the condensation of ATP and 5-phosphoribose 1-diphosphate to form N'-(5'-phosphoribosyl)-ATP (PR-ATP). Has a crucial role in the pathway because the rate of histidine biosynthesis seems to be controlled primarily by regulation of HisG enzymatic activity. The polypeptide is ATP phosphoribosyltransferase (Caldicellulosiruptor bescii (strain ATCC BAA-1888 / DSM 6725 / KCTC 15123 / Z-1320) (Anaerocellum thermophilum)).